Here is a 166-residue protein sequence, read N- to C-terminus: NAD(P)H-quinone oxidoreductase subunit I, chloroplastic (166 aa).

2 consecutive 4Fe-4S ferredoxin-type domains span residues 55-84 (GRIHFEFDKCIACEVCVRVCPIDLPVVDWK) and 95-124 (LNYSIDFGICIFCGNCVEYCPTNCLSMTEE). [4Fe-4S] cluster contacts are provided by Cys64, Cys67, Cys70, Cys74, Cys104, Cys107, Cys110, and Cys114.

The protein belongs to the complex I 23 kDa subunit family. NDH is composed of at least 16 different subunits, 5 of which are encoded in the nucleus. It depends on [4Fe-4S] cluster as a cofactor.

The protein localises to the plastid. Its subcellular location is the chloroplast thylakoid membrane. It catalyses the reaction a plastoquinone + NADH + (n+1) H(+)(in) = a plastoquinol + NAD(+) + n H(+)(out). It carries out the reaction a plastoquinone + NADPH + (n+1) H(+)(in) = a plastoquinol + NADP(+) + n H(+)(out). NDH shuttles electrons from NAD(P)H:plastoquinone, via FMN and iron-sulfur (Fe-S) centers, to quinones in the photosynthetic chain and possibly in a chloroplast respiratory chain. The immediate electron acceptor for the enzyme in this species is believed to be plastoquinone. Couples the redox reaction to proton translocation, and thus conserves the redox energy in a proton gradient. This Hofmeisteria fasciculata (Helogyne fasciculata) protein is NAD(P)H-quinone oxidoreductase subunit I, chloroplastic.